Reading from the N-terminus, the 965-residue chain is Valine--tRNA ligase (965 aa).

The disordered stretch occupies residues 1-22 (MENTPSHINKTEPSLDKTYSPQ). The short motif at 56 to 66 (PNVTGSLHMGH) is the 'HIGH' region element. Residues 568-572 (KMSKS) carry the 'KMSKS' region motif. ATP is bound at residue K571. A coiled-coil region spans residues 896–965 (LIDKATELDR…IEQQATIAAL (70 aa)).

This sequence belongs to the class-I aminoacyl-tRNA synthetase family. ValS type 1 subfamily. As to quaternary structure, monomer.

It localises to the cytoplasm. It catalyses the reaction tRNA(Val) + L-valine + ATP = L-valyl-tRNA(Val) + AMP + diphosphate. Functionally, catalyzes the attachment of valine to tRNA(Val). As ValRS can inadvertently accommodate and process structurally similar amino acids such as threonine, to avoid such errors, it has a 'posttransfer' editing activity that hydrolyzes mischarged Thr-tRNA(Val) in a tRNA-dependent manner. This chain is Valine--tRNA ligase, found in Yersinia pestis.